The sequence spans 179 residues: UPF0134 protein MPN_145 (179 aa).

It belongs to the UPF0134 family.

The chain is UPF0134 protein MPN_145 from Mycoplasma pneumoniae (strain ATCC 29342 / M129 / Subtype 1) (Mycoplasmoides pneumoniae).